A 119-amino-acid chain; its full sequence is Toxin ICK-9 (119 aa).

The N-terminal stretch at 1-19 is a signal peptide; the sequence is MMKLYSLVIIATLAAAAFA. Intrachain disulfides connect Cys59-Cys74, Cys67-Cys80, Cys71-Cys116, and Cys73-Cys87.

Belongs to the neurotoxin 25 family. ICK-8 subfamily. In terms of tissue distribution, expressed by the venom gland.

The protein resides in the secreted. Ion channel inhibitor. The chain is Toxin ICK-9 from Trittame loki (Brush-footed trapdoor spider).